A 618-amino-acid chain; its full sequence is tRNA endonuclease vms-1 (618 aa).

The C2H2-type zinc finger occupies 59–85 (DQCTTCNCPVDFGDRAVLLEHYQSLFH). The VLRF1 domain maps to 170–311 (RPFDCAIFLW…SDCWQRLQQV (142 aa)). The active site involves Gln-213. ANK repeat units lie at residues 437–466 (NRST…CDSS) and 470–496 (GAGL…VKNE). A disordered region spans residues 502–539 (ARTHIPEPKKKVELTEEQEREQAERKKEKKARQKEKEK). Residues 505–515 (HIPEPKKKVEL) show a composition bias toward basic and acidic residues. Residues 510 to 557 (KKKVELTEEQEREQAERKKEKKARQKEKEKLKKEIAKRDVEEMEERQK) adopt a coiled-coil conformation.

It belongs to the ANKZF1/VMS1 family. As to expression, in larval stages and in adults, expressed in intestinal cells, specific neurons in the head and the tail, and in the ventral nerve cord.

It is found in the cytoplasm. Its subcellular location is the mitochondrion. Endonuclease that cleaves polypeptidyl-tRNAs downstream of the ribosome-associated quality control (RQC) pathway to release incompletely synthesized polypeptides for degradation. The RQC pathway disassembles aberrantly stalled translation complexes to recycle or degrade the constituent parts. Dispensable for viability and growth but is required for protection against oxidative stress and for wild-type life span. The sequence is that of tRNA endonuclease vms-1 (vms-1) from Caenorhabditis elegans.